We begin with the raw amino-acid sequence, 139 residues long: 3-hydroxyacyl-[acyl-carrier-protein] dehydratase FabZ (139 aa).

Residue His46 is part of the active site.

This sequence belongs to the thioester dehydratase family. FabZ subfamily.

It is found in the cytoplasm. The enzyme catalyses a (3R)-hydroxyacyl-[ACP] = a (2E)-enoyl-[ACP] + H2O. Its function is as follows. Involved in unsaturated fatty acids biosynthesis. Catalyzes the dehydration of short chain beta-hydroxyacyl-ACPs and long chain saturated and unsaturated beta-hydroxyacyl-ACPs. This is 3-hydroxyacyl-[acyl-carrier-protein] dehydratase FabZ from Petrotoga mobilis (strain DSM 10674 / SJ95).